Here is a 652-residue protein sequence, read N- to C-terminus: ATP-dependent zinc metalloprotease FtsH 1 (652 aa).

Over 1-9 (MSDNKWLRN) the chain is Cytoplasmic. The chain crosses the membrane as a helical span at residues 10–30 (GFVWMILIIAAIAVWVTFVQG). Residues 31 to 110 (GRGGATITTQ…QTHRASQWGN (80 aa)) lie on the Extracellular side of the membrane. The chain crosses the membrane as a helical span at residues 111-131 (VLGTLTFLLPTLFLIGVIIFM). The Cytoplasmic segment spans residues 132-652 (MRQAQGTNNQ…VPHIKPQPAS (521 aa)). 203–210 (GPPGTGKT) contacts ATP. Position 425 (histidine 425) interacts with Zn(2+). Glutamate 426 is a catalytic residue. Zn(2+)-binding residues include histidine 429 and aspartate 501. Residues 623–652 (IATPETARPDSPSEARPAAPVPHIKPQPAS) form a disordered region. Pro residues predominate over residues 641-652 (APVPHIKPQPAS).

It in the central section; belongs to the AAA ATPase family. This sequence in the C-terminal section; belongs to the peptidase M41 family. Homohexamer. Zn(2+) serves as cofactor.

The protein resides in the cell membrane. Functionally, acts as a processive, ATP-dependent zinc metallopeptidase for both cytoplasmic and membrane proteins. Plays a role in the quality control of integral membrane proteins. The chain is ATP-dependent zinc metalloprotease FtsH 1 from Thermomicrobium roseum (strain ATCC 27502 / DSM 5159 / P-2).